Reading from the N-terminus, the 775-residue chain is DNA polymerase (775 aa).

Belongs to the DNA polymerase type-B family. Monomer.

The catalysed reaction is DNA(n) + a 2'-deoxyribonucleoside 5'-triphosphate = DNA(n+1) + diphosphate. Functionally, in addition to polymerase activity, this DNA polymerase exhibits 3' to 5' exonuclease activity. The protein is DNA polymerase (pol) of Pyrococcus glycovorans.